Reading from the N-terminus, the 461-residue chain is Probable carboxypeptidase MGYG_04702 (461 aa).

Residues 1–20 form the signal peptide; it reads MQKTYLLALVSLLASSLVEA. N-linked (GlcNAc...) asparagine glycosylation is found at Asn48 and Asn99. Asp176 serves as a coordination point for Zn(2+). Glu208 (proton acceptor) is an active-site residue. Residue Glu209 participates in Zn(2+) binding. Asn396 carries N-linked (GlcNAc...) asparagine glycosylation.

The protein belongs to the peptidase M20A family. The cofactor is Zn(2+).

Its subcellular location is the secreted. The sequence is that of Probable carboxypeptidase MGYG_04702 from Arthroderma gypseum (strain ATCC MYA-4604 / CBS 118893) (Microsporum gypseum).